Here is a 77-residue protein sequence, read N- to C-terminus: Small ribosomal subunit protein bS18 (77 aa).

Belongs to the bacterial ribosomal protein bS18 family. As to quaternary structure, part of the 30S ribosomal subunit. Forms a tight heterodimer with protein bS6.

Its function is as follows. Binds as a heterodimer with protein bS6 to the central domain of the 16S rRNA, where it helps stabilize the platform of the 30S subunit. The sequence is that of Small ribosomal subunit protein bS18 from Bacillus thuringiensis subsp. konkukian (strain 97-27).